A 512-amino-acid chain; its full sequence is Rab11 family-interacting protein 2 (512 aa).

A C2 domain is found at 1-120 (MMLSEQAQKW…DKQRRKTEWF (120 aa)). The tract at residues 15-102 (VQVTVLQAKD…GLDKFLGQVA (88 aa)) is necessary for its cellular translocation to the plasma membrane. Disordered regions lie at residues 174–231 (RKSD…MSDL) and 263–287 (PESGSLKSPHRRTLSFDTSKLNQPG). Composition is skewed to polar residues over residues 221–231 (RLSSAHSMSDL) and 277–287 (SFDTSKLNQPG). At S227 the chain carries Phosphoserine; by MARK2. Phosphoserine is present on S277. The NPF 1 signature appears at 323–325 (NPF). The segment covering 347-374 (KESKREKREKVSLFERVTGKRDSRRPDK) has biased composition (basic and acidic residues). Positions 347–390 (KESKREKREKVSLFERVTGKRDSRRPDKLNNGGSDSPCDLKSPS) are disordered. 2 consecutive short sequence motifs (NPF) follow at residues 406 to 408 (NPF) and 440 to 442 (NPF). The FIP-RBD domain occupies 437–499 (PDNNPFDATA…EETPSILRVP (63 aa)). The interval 465–512 (ELLRRKDTHIRELEDYIDNLLVRVMEETPSILRVPYEPSRKAGKFTNS) is necessary for interaction with AP2A1, RAB11A, subcellular location, endocytosis activity and homooligomerization.

Homooligomerizes in a Rab11-independent manner. Forms a heterooligomeric complex with RAB11FIP4. Interacts with AP2A1, MYO5B, RAB25 and REPS1. Interacts with RAB11A and RAB11B (activated GTP-bound form). Interacts with NPC1L1. Interacts (via NPF motifs) with EHD1 and EHD3. Interacts with TICAM2; this interaction directs RAB11FIP2 to the phagosome. Interacts with RAB14 and RAB25 (GTP-bound forms). Phosphorylation at Ser-227 by MARK2 regulates epithelial cell polarity.

It localises to the cell membrane. The protein localises to the recycling endosome membrane. Its function is as follows. A Rab11 effector binding preferentially phosphatidylinositol 3,4,5-trisphosphate (PtdInsP3) and phosphatidic acid (PA) and acting in the regulation of the transport of vesicles from the endosomal recycling compartment (ERC) to the plasma membrane. Involved in insulin granule exocytosis. Also involved in receptor-mediated endocytosis and membrane trafficking of recycling endosomes, probably originating from clathrin-coated vesicles. Required in a complex with MYO5B and RAB11 for the transport of NPC1L1 to the plasma membrane. Also acts as a regulator of cell polarity. Plays an essential role in phagocytosis through a mechanism involving TICAM2, RAC1 and CDC42 Rho GTPases for controlling actin-dynamics. This is Rab11 family-interacting protein 2 (Rab11fip2) from Mus musculus (Mouse).